The chain runs to 256 residues: Thiazole synthase (256 aa).

The active-site Schiff-base intermediate with DXP is the lysine 98. 1-deoxy-D-xylulose 5-phosphate is bound by residues glycine 159, 185–186 (AG), and 207–208 (NT).

This sequence belongs to the ThiG family. In terms of assembly, homotetramer. Forms heterodimers with either ThiH or ThiS.

The protein resides in the cytoplasm. It catalyses the reaction [ThiS sulfur-carrier protein]-C-terminal-Gly-aminoethanethioate + 2-iminoacetate + 1-deoxy-D-xylulose 5-phosphate = [ThiS sulfur-carrier protein]-C-terminal Gly-Gly + 2-[(2R,5Z)-2-carboxy-4-methylthiazol-5(2H)-ylidene]ethyl phosphate + 2 H2O + H(+). Its pathway is cofactor biosynthesis; thiamine diphosphate biosynthesis. Functionally, catalyzes the rearrangement of 1-deoxy-D-xylulose 5-phosphate (DXP) to produce the thiazole phosphate moiety of thiamine. Sulfur is provided by the thiocarboxylate moiety of the carrier protein ThiS. In vitro, sulfur can be provided by H(2)S. This Aliivibrio fischeri (strain ATCC 700601 / ES114) (Vibrio fischeri) protein is Thiazole synthase.